Reading from the N-terminus, the 479-residue chain is F-box/LRR-repeat protein 16 (479 aa).

A disordered region spans residues 1-92 (MSSPGIDGDP…GPVSGPPVER (92 aa)). The segment covering 47–60 (CQPPPPPTLPPPSL) has biased composition (pro residues). Omega-N-methylarginine is present on R92. Residues 94–139 (PLATDEKILNGLFWYFSACEKCILAQVCKAWRRVLYQPKFWAGLTP) enclose the F-box domain. LRR repeat units lie at residues 321–342 (NLTS…ELVA), 347–369 (KLRS…YVAC), 373–394 (RLEE…SYLS), 398–419 (SLRS…KHLL), 423–444 (NLRL…SGLV), and 446–470 (LQEL…YFSQ).

As to quaternary structure, interacts with SKP1 and CUL1.

Its function is as follows. Substrate-recognition component of the SCF (SKP1-CUL1-F-box protein)-type E3 ubiquitin ligase complex. The polypeptide is F-box/LRR-repeat protein 16 (Fbxl16) (Mus musculus (Mouse)).